We begin with the raw amino-acid sequence, 36 residues long: Pancreatic polypeptide (36 aa).

Y36 is subject to Tyrosine amide.

It belongs to the NPY family.

It is found in the secreted. In terms of biological role, hormone secreted by pancreatic cells that acts as a regulator of pancreatic and gastrointestinal functions. The protein is Pancreatic polypeptide (PPY) of Meleagris gallopavo (Wild turkey).